Here is a 517-residue protein sequence, read N- to C-terminus: ATP synthase subunit beta (517 aa).

Residue 167–174 participates in ATP binding; the sequence is GGAGVGKT. 2 stretches are compositionally biased toward basic and acidic residues: residues 475 to 484 and 495 to 508; these read AESMGAKMDD and DSKD…KADD. The tract at residues 475–517 is disordered; it reads AESMGAKMDDGGSDGAPPPSDSKDKGKGDSKADDKGDDADKDA.

Belongs to the ATPase alpha/beta chains family. In terms of assembly, F-type ATPases have 2 components, CF(1) - the catalytic core - and CF(0) - the membrane proton channel. CF(1) has five subunits: alpha(3), beta(3), gamma(1), delta(1), epsilon(1). CF(0) has three main subunits: a(1), b(2) and c(9-12). The alpha and beta chains form an alternating ring which encloses part of the gamma chain. CF(1) is attached to CF(0) by a central stalk formed by the gamma and epsilon chains, while a peripheral stalk is formed by the delta and b chains.

The protein localises to the cell membrane. The catalysed reaction is ATP + H2O + 4 H(+)(in) = ADP + phosphate + 5 H(+)(out). Its function is as follows. Produces ATP from ADP in the presence of a proton gradient across the membrane. The catalytic sites are hosted primarily by the beta subunits. This Mycobacterium sp. (strain JLS) protein is ATP synthase subunit beta.